A 98-amino-acid polypeptide reads, in one-letter code: Defensin-like protein 192 (98 aa).

Positions 1–27 are cleaved as a signal peptide; the sequence is MATKSVSTFAIFFILVLAIFETPEIEA. 4 disulfides stabilise this stretch: cysteine 32-cysteine 86, cysteine 45-cysteine 69, cysteine 54-cysteine 81, and cysteine 58-cysteine 83.

This sequence belongs to the DEFL family. Protease inhibitor I18 (RTI/MTI-2) subfamily.

It is found in the secreted. The sequence is that of Defensin-like protein 192 (ATTI7) from Arabidopsis thaliana (Mouse-ear cress).